The primary structure comprises 596 residues: Actin-histidine N-methyltransferase (596 aa).

The disordered stretch occupies residues 1-22; the sequence is MGKKSRVKTQKSGTGATATVSP. Polar residues predominate over residues 10–20; it reads QKSGTGATATV. S-adenosyl-L-methionine contacts are provided by residues Arg-75, 104–106, Arg-254, 275–279, and 325–327; these read EGF, DMCNH, and SGF. An SET domain is found at 94–314; it reads EGFEMVNFKE…AGDQIYIFYG (221 aa). The tract at residues 551–596 is disordered; sequence GLVNGESLIPNGTRSENESLSPEESENTTGDTEESSGSMDAVKERL. Residues 571-584 are compositionally biased toward acidic residues; that stretch reads SPEESENTTGDTEE.

This sequence belongs to the class V-like SAM-binding methyltransferase superfamily. SETD3 actin-histidine methyltransferase family. Interacts with MYOD1. Phosphorylated by GSK3B, which is required for recognition by the SCF(FBXW7) complex and subsequent degradation. In terms of processing, ubiquitinated by the SCF(FBXW7) complex following phosphorylation by GSK3B, leading to its degradation by the proteasome.

It is found in the cytoplasm. It localises to the nucleus. The catalysed reaction is L-histidyl-[protein] + S-adenosyl-L-methionine = N(tele)-methyl-L-histidyl-[protein] + S-adenosyl-L-homocysteine + H(+). Protein-histidine N-methyltransferase that specifically mediates 3-methylhistidine (tele-methylhistidine) methylation of actin at 'His-73'. Histidine methylation of actin is required for smooth muscle contraction of the laboring uterus during delivery. Does not have protein-lysine N-methyltransferase activity and probably only catalyzes histidine methylation of actin. In Rattus norvegicus (Rat), this protein is Actin-histidine N-methyltransferase.